We begin with the raw amino-acid sequence, 520 residues long: F-box/LRR-repeat protein At3g59200 (520 aa).

The region spanning 6 to 54 is the F-box domain; sequence RDRISSLPNPVVSHILSFLPTKEAASTSVLSKKWRYLFAYVTNLDFDDS. 3 LRR repeats span residues 170–197, 219–244, and 340–365; these read CVDV…VLMN, FCEE…EYSD, and NSEI…VLKR.

The polypeptide is F-box/LRR-repeat protein At3g59200 (Arabidopsis thaliana (Mouse-ear cress)).